We begin with the raw amino-acid sequence, 92 residues long: Transcription factor ILI6 (92 aa).

The tract at residues 1–20 is disordered; sequence MSSRRSRSRQSGSSRITDEQ. Residues 5 to 59 enclose the bHLH domain; it reads RSRSRQSGSSRITDEQISDLVSKLQDLLPEARLRSNDRVPSSRVLQETCNYIRSL.

It belongs to the bHLH protein family. As to quaternary structure, interacts with APG.

The protein localises to the nucleus. Atypical and probable non DNA-binding bHLH transcription factor that acts as a positive regulator of grain size. Binds the transcription repressor APG and forms a heterodimer of antagonistic bHLH transcription factors that regulates grain length and weight by controlling cell elongation in lemma and palea. May be involved in the control of lamina inclination through brassinosteroid signaling pathway. The sequence is that of Transcription factor ILI6 (ILI6) from Oryza sativa subsp. indica (Rice).